Reading from the N-terminus, the 119-residue chain is Large ribosomal subunit protein bL20 (119 aa).

The protein belongs to the bacterial ribosomal protein bL20 family.

Binds directly to 23S ribosomal RNA and is necessary for the in vitro assembly process of the 50S ribosomal subunit. It is not involved in the protein synthesizing functions of that subunit. This is Large ribosomal subunit protein bL20 from Syntrophus aciditrophicus (strain SB).